The chain runs to 398 residues: MESVLSKYENQITIFADYLEEFPDTDELVWILGKQHLLKTEKSKLLSDISARLWFTYRRKFSPIGGTGPSSDAGWGCMLRCGQMMLAQALICRHLGRDWNWEKQKEQPKEYQRILQCFLDRKDCCYSIHQMAQMGVGEGKSIGEWFGPNTVAQVLKKLALFDEWNSLAVYVSMDNTVVIEDIKKMCRTLSLSADTPAERPLESLTASNQSKGPSACCTAWKPLLLIVPLRLGINQINPVYVDAFKECFKMPQSLGALGGKPNNAYYFIGFLGDELIFLDPHTTQTFVDTEENGTADDQTFHCLQPPQRMNILNLDPSVALGFFCKEEKDFDSWCSLVQKEILKENLRMFELVQKHPSHWPPFVPPAKPEVTTTGAEFIDSTEQLEEFDLEEDFEILSI.

The active-site Nucleophile is the C77. Residues D279 and H281 contribute to the active site. Residues 393 to 396 (FEIL) carry the LIR motif.

The protein belongs to the peptidase C54 family. In terms of assembly, interacts with ATG9A; the interaction is direct.

Its subcellular location is the cytoplasm. It catalyses the reaction [protein]-C-terminal L-amino acid-glycyl-phosphatidylethanolamide + H2O = [protein]-C-terminal L-amino acid-glycine + a 1,2-diacyl-sn-glycero-3-phosphoethanolamine. Inhibited by N-ethylmaleimide. Redox-regulated during autophagy since reducing conditions activate ATG4A whereas an oxidizing environment such as the presence of H(2)O(2) inhibits its activity. In terms of biological role, cysteine protease that plays a key role in autophagy by mediating both proteolytic activation and delipidation of ATG8 family proteins. The protease activity is required for proteolytic activation of ATG8 family proteins: cleaves the C-terminal amino acid of ATG8 proteins to reveal a C-terminal glycine. Exposure of the glycine at the C-terminus is essential for ATG8 proteins conjugation to phosphatidylethanolamine (PE) and insertion to membranes, which is necessary for autophagy. Preferred substrate is GABARAPL2 followed by MAP1LC3A and GABARAP. Protease activity is also required to counteract formation of high-molecular weight conjugates of ATG8 proteins (ATG8ylation): acts as a deubiquitinating-like enzyme that removes ATG8 conjugated to other proteins, such as ATG3. In addition to the protease activity, also mediates delipidation of ATG8 family proteins. Catalyzes delipidation of PE-conjugated forms of ATG8 proteins during macroautophagy. Compared to ATG4B, the major protein for proteolytic activation of ATG8 proteins, shows weaker ability to cleave the C-terminal amino acid of ATG8 proteins, while it displays stronger delipidation activity. Involved in phagophore growth during mitophagy independently of its protease activity and of ATG8 proteins: acts by regulating ATG9A trafficking to mitochondria and promoting phagophore-endoplasmic reticulum contacts during the lipid transfer phase of mitophagy. (Microbial infection) Mediates cleavage of an ATG8 protein homolog coded in the genome of cytopathogenic bovine viral diarrhea virus (BVDV). This chain is Cysteine protease ATG4A, found in Bos taurus (Bovine).